Consider the following 341-residue polypeptide: Ribose-phosphate pyrophosphokinase 5 (341 aa).

Mg(2+) is bound by residues D152, H154, and D167.

Belongs to the ribose-phosphate pyrophosphokinase family.

It is found in the cytoplasm. It catalyses the reaction D-ribose 5-phosphate + ATP = 5-phospho-alpha-D-ribose 1-diphosphate + AMP + H(+). The protein operates within metabolic intermediate biosynthesis; 5-phospho-alpha-D-ribose 1-diphosphate biosynthesis; 5-phospho-alpha-D-ribose 1-diphosphate from D-ribose 5-phosphate (route I): step 1/1. Functionally, 5-phosphoribose 1-diphosphate synthase involved in nucleotide, histidine, and tryptophan biosynthesis. Active in heteromultimeric complexes with other 5-phosphoribose 1-diphosphate synthases. This Schizosaccharomyces pombe (strain 972 / ATCC 24843) (Fission yeast) protein is Ribose-phosphate pyrophosphokinase 5.